Here is a 274-residue protein sequence, read N- to C-terminus: Shikimate dehydrogenase (NADP(+)) (274 aa).

Residues 15–17 (SKS) and threonine 62 each bind shikimate. Lysine 66 functions as the Proton acceptor in the catalytic mechanism. Aspartate 78 is an NADP(+) binding site. Residues asparagine 87 and aspartate 102 each coordinate shikimate. Residues 127–131 (GAGGA) and methionine 215 contribute to the NADP(+) site. Tyrosine 217 lines the shikimate pocket. Glycine 239 contributes to the NADP(+) binding site.

This sequence belongs to the shikimate dehydrogenase family. In terms of assembly, homodimer.

The catalysed reaction is shikimate + NADP(+) = 3-dehydroshikimate + NADPH + H(+). It participates in metabolic intermediate biosynthesis; chorismate biosynthesis; chorismate from D-erythrose 4-phosphate and phosphoenolpyruvate: step 4/7. Its function is as follows. Involved in the biosynthesis of the chorismate, which leads to the biosynthesis of aromatic amino acids. Catalyzes the reversible NADPH linked reduction of 3-dehydroshikimate (DHSA) to yield shikimate (SA). The sequence is that of Shikimate dehydrogenase (NADP(+)) from Dechloromonas aromatica (strain RCB).